Consider the following 555-residue polypeptide: Glucose-6-phosphate isomerase (555 aa).

Residue E356 is the Proton donor of the active site. Residues H387 and K515 contribute to the active site.

It belongs to the GPI family.

The protein localises to the cytoplasm. The catalysed reaction is alpha-D-glucose 6-phosphate = beta-D-fructose 6-phosphate. It participates in carbohydrate biosynthesis; gluconeogenesis. The protein operates within carbohydrate degradation; glycolysis; D-glyceraldehyde 3-phosphate and glycerone phosphate from D-glucose: step 2/4. Its function is as follows. Catalyzes the reversible isomerization of glucose-6-phosphate to fructose-6-phosphate. In Desulforapulum autotrophicum (strain ATCC 43914 / DSM 3382 / VKM B-1955 / HRM2) (Desulfobacterium autotrophicum), this protein is Glucose-6-phosphate isomerase.